A 713-amino-acid polypeptide reads, in one-letter code: Constitutive lysine decarboxylase (713 aa).

N6-(pyridoxal phosphate)lysine is present on lysine 367.

Belongs to the Orn/Lys/Arg decarboxylase class-I family. In terms of assembly, homodecamer; built of five dimers associated in a 5-fold symmetrical double-ring. Requires pyridoxal 5'-phosphate as cofactor.

The catalysed reaction is L-lysine + H(+) = cadaverine + CO2. Plays a role in lysine utilization by acting as a lysine decarboxylase. This chain is Constitutive lysine decarboxylase (ldcC), found in Escherichia coli (strain K12).